The sequence spans 290 residues: 4-hydroxybenzoate octaprenyltransferase (290 aa).

The next 8 membrane-spanning stretches (helical) occupy residues 21–41 (IGTMLLLWPCLMALLLAADGM), 44–64 (LRVLIIFIIGVVVMRACGCII), 97–117 (LFVVLGLFAFSLVLLLNPLVV), 143–163 (FLGVVWSWSIPMAYAAQTGEV), 168–188 (WWLFAANWCWTVAYDTMYAMV), 211–231 (EIIGAFQLAALGCFIAAGWSG), 235–255 (LLYGLGVLTFVGFSAYQQRLI), and 270–290 (NNWAGLSLFLALGADYAFAAL).

This sequence belongs to the UbiA prenyltransferase family. Requires Mg(2+) as cofactor.

The protein localises to the cell inner membrane. It carries out the reaction all-trans-octaprenyl diphosphate + 4-hydroxybenzoate = 4-hydroxy-3-(all-trans-octaprenyl)benzoate + diphosphate. The protein operates within cofactor biosynthesis; ubiquinone biosynthesis. In terms of biological role, catalyzes the prenylation of para-hydroxybenzoate (PHB) with an all-trans polyprenyl group. Mediates the second step in the final reaction sequence of ubiquinone-8 (UQ-8) biosynthesis, which is the condensation of the polyisoprenoid side chain with PHB, generating the first membrane-bound Q intermediate 3-octaprenyl-4-hydroxybenzoate. This chain is 4-hydroxybenzoate octaprenyltransferase, found in Shewanella amazonensis (strain ATCC BAA-1098 / SB2B).